We begin with the raw amino-acid sequence, 123 residues long: Probable histone H2B 4 (123 aa).

A disordered region spans residues 1-30; sequence MPPKPSAKGAKKAAKTVVAKPKDGKKRRHA. A glycan (O-linked (GlcNAc) serine) is linked at serine 110. Lysine 118 is covalently cross-linked (Glycyl lysine isopeptide (Lys-Gly) (interchain with G-Cter in ubiquitin)).

It belongs to the histone H2B family. The nucleosome is a histone octamer containing two molecules each of H2A, H2B, H3 and H4 assembled in one H3-H4 heterotetramer and two H2A-H2B heterodimers. The octamer wraps approximately 147 bp of DNA. Post-translationally, monoubiquitination of Lys-118 gives a specific tag for epigenetic transcriptional activation and is also prerequisite for histone H3 'Lys-4' and 'Lys-79' methylation. GlcNAcylation at Ser-110 promotes monoubiquitination of Lys-118. It fluctuates in response to extracellular glucose, and associates with transcribed genes.

It localises to the nucleus. The protein resides in the chromosome. Core component of nucleosome. Nucleosomes wrap and compact DNA into chromatin, limiting DNA accessibility to the cellular machineries which require DNA as a template. Histones thereby play a central role in transcription regulation, DNA repair, DNA replication and chromosomal stability. DNA accessibility is regulated via a complex set of post-translational modifications of histones, also called histone code, and nucleosome remodeling. This Caenorhabditis elegans protein is Probable histone H2B 4 (his-48).